The primary structure comprises 72 residues: Translation initiation factor IF-1 (72 aa).

The S1-like domain maps to 1 to 72; the sequence is MAKEEPIEVE…TRGRIIYRTK (72 aa).

Belongs to the IF-1 family. As to quaternary structure, component of the 30S ribosomal translation pre-initiation complex which assembles on the 30S ribosome in the order IF-2 and IF-3, IF-1 and N-formylmethionyl-tRNA(fMet); mRNA recruitment can occur at any time during PIC assembly.

It is found in the cytoplasm. In terms of biological role, one of the essential components for the initiation of protein synthesis. Stabilizes the binding of IF-2 and IF-3 on the 30S subunit to which N-formylmethionyl-tRNA(fMet) subsequently binds. Helps modulate mRNA selection, yielding the 30S pre-initiation complex (PIC). Upon addition of the 50S ribosomal subunit IF-1, IF-2 and IF-3 are released leaving the mature 70S translation initiation complex. The protein is Translation initiation factor IF-1 of Syntrophus aciditrophicus (strain SB).